An 861-amino-acid polypeptide reads, in one-letter code: Bifunctional uridylyltransferase/uridylyl-removing enzyme (861 aa).

Residues 1-321 (MKNDNRIIKN…VYHQKQKIIR (321 aa)) form a uridylyltransferase region. The tract at residues 322–678 (LDDEFQLSNR…IMPHHSQGGT (357 aa)) is uridylyl-removing. The 123-residue stretch at 440-562 (VDQHTLFVIR…LPHARYLDYL (123 aa)) folds into the HD domain. 2 ACT domains span residues 679-760 (EVFI…AVSR) and 788-861 (QLFL…KSKY).

It belongs to the GlnD family. Mg(2+) is required as a cofactor.

The catalysed reaction is [protein-PII]-L-tyrosine + UTP = [protein-PII]-uridylyl-L-tyrosine + diphosphate. It carries out the reaction [protein-PII]-uridylyl-L-tyrosine + H2O = [protein-PII]-L-tyrosine + UMP + H(+). Uridylyltransferase (UTase) activity is inhibited by glutamine, while glutamine activates uridylyl-removing (UR) activity. Its function is as follows. Modifies, by uridylylation and deuridylylation, the PII regulatory proteins (GlnB and homologs), in response to the nitrogen status of the cell that GlnD senses through the glutamine level. Under low glutamine levels, catalyzes the conversion of the PII proteins and UTP to PII-UMP and PPi, while under higher glutamine levels, GlnD hydrolyzes PII-UMP to PII and UMP (deuridylylation). Thus, controls uridylylation state and activity of the PII proteins, and plays an important role in the regulation of nitrogen assimilation and metabolism. This chain is Bifunctional uridylyltransferase/uridylyl-removing enzyme, found in Legionella pneumophila subsp. pneumophila (strain Philadelphia 1 / ATCC 33152 / DSM 7513).